Here is a 262-residue protein sequence, read N- to C-terminus: Tryptophan synthase alpha chain (262 aa).

Catalysis depends on proton acceptor residues E52 and D63.

The protein belongs to the TrpA family. In terms of assembly, tetramer of two alpha and two beta chains.

The enzyme catalyses (1S,2R)-1-C-(indol-3-yl)glycerol 3-phosphate + L-serine = D-glyceraldehyde 3-phosphate + L-tryptophan + H2O. Its pathway is amino-acid biosynthesis; L-tryptophan biosynthesis; L-tryptophan from chorismate: step 5/5. Functionally, the alpha subunit is responsible for the aldol cleavage of indoleglycerol phosphate to indole and glyceraldehyde 3-phosphate. The chain is Tryptophan synthase alpha chain from Mycobacteroides abscessus (strain ATCC 19977 / DSM 44196 / CCUG 20993 / CIP 104536 / JCM 13569 / NCTC 13031 / TMC 1543 / L948) (Mycobacterium abscessus).